The primary structure comprises 471 residues: Reticulon-2 (471 aa).

3 disordered regions span residues 1 to 137 (MGQV…ERPL), 153 to 181 (SAGS…ASEA), and 205 to 234 (QLSP…DDEP). The span at 14 to 25 (APSTASSTPDST) shows a compositional bias: low complexity. A compositionally biased stretch (basic and acidic residues) spans 32–43 (SDFRELHTAREF). The residue at position 44 (serine 44) is a Phosphoserine. Composition is skewed to polar residues over residues 100–118 (PQQS…LSQS) and 159–168 (DSATSSSTPL). Acidic residues predominate over residues 169-181 (ENEEPDGLEASEA). The span at 205–229 (QLSPSSGTPQAHTPSPQRSQDSNSG) shows a compositional bias: polar residues. Phosphoserine is present on residues serine 226 and serine 228. Residues 272–471 (VADLLYWKDT…SVSGSKAKAE (200 aa)) enclose the Reticulon domain. The next 2 membrane-spanning stretches (helical) occupy residues 295–315 (LLCL…LLGL) and 390–410 (LLFY…LVIL).

As to quaternary structure, interacts with SPAST. Interacts with BACE1. Interacts (via first transmembrane domain) with ARL6IP5/GTRAP3-18. Interacts (via N-terminus) with SLC1A1/EAAC1; the interaction promotes cell surface expression of SLC1A1. Detected in skeletal and cardiac muscle (at protein level). Expressed predominantly in neural and muscular tissues.

The protein localises to the endoplasmic reticulum membrane. The protein resides in the sarcoplasmic reticulum membrane. Its subcellular location is the cell membrane. It localises to the sarcolemma. It is found in the T-tubule. The protein localises to the cytoplasm. The protein resides in the myofibril. Its subcellular location is the sarcomere. It localises to the z line. It is found in the cytoskeleton. Functionally, inhibits amyloid precursor protein processing, probably by blocking BACE1 activity. Enhances trafficking of the glutamate transporter SLC1A1/EAAC1 from the endoplasmic reticulum to the cell surface. Plays a role in the translocation of SLC2A4/GLUT4 from intracellular membranes to the cell membrane which facilitates the uptake of glucose into the cell. The protein is Reticulon-2 of Mus musculus (Mouse).